The primary structure comprises 322 residues: D-alanine--D-alanine ligase (322 aa).

An ATP-grasp domain is found at 110-310 (KAVLAAAGIP…FDRLVFWIVE (201 aa)). Residue 137-191 (MPPPYVVKPNAEGSSVGVSLVFEGANGPPRQLAAPDWAFGEQVMVEPYIPGLELA) participates in ATP binding. 3 residues coordinate Mg(2+): Asp-263, Glu-277, and Asn-279.

It belongs to the D-alanine--D-alanine ligase family. The cofactor is Mg(2+). Mn(2+) serves as cofactor.

The protein resides in the cytoplasm. It catalyses the reaction 2 D-alanine + ATP = D-alanyl-D-alanine + ADP + phosphate + H(+). It functions in the pathway cell wall biogenesis; peptidoglycan biosynthesis. Its function is as follows. Cell wall formation. The polypeptide is D-alanine--D-alanine ligase (Caulobacter sp. (strain K31)).